Consider the following 413-residue polypeptide: MQPNYYRVIKKATSFSGLDMISHAYGQIAGVEVVGFYLWLITEANAQAFNSEIRTPISRLQNAFNTTGTKNVNVPDWIYKTIGKLESLGLVRTFFSQEKSEMTFWIVEPLGWKEFNQKKHFKEKLIESMGKLEYDRNCLSFEQIDNIQFDNALEITANFEANFTSKQDCLSFSFDFEAFHKQLVKQNLFVSFNQKTKAVINGYFEKYQITLEGILECVIPSVVNDEVDLELLQKLLEQLVKNNTAPIVDTVINDRNFFYDNQNLATETKDAISRCHLEYNAEKYLFLLYGKVENEQLDLIRRLRQEFGIADKVINLIVDFSFWKNNSMWREQYILKIAESVERYRSHNNYQATLDNFIRASSLAKKQRTKTKIEKSEPETSAAPVNETDDVNYFLNRIKAINKKNRENGKHKR.

This is an uncharacterized protein from Mycoplasma pneumoniae (strain ATCC 29342 / M129 / Subtype 1) (Mycoplasmoides pneumoniae).